The primary structure comprises 507 residues: ATP synthase subunit alpha, chloroplastic (507 aa).

An ATP-binding site is contributed by 170–177 (GDRQTGKT).

Belongs to the ATPase alpha/beta chains family. As to quaternary structure, F-type ATPases have 2 components, CF(1) - the catalytic core - and CF(0) - the membrane proton channel. CF(1) has five subunits: alpha(3), beta(3), gamma(1), delta(1), epsilon(1). CF(0) has four main subunits: a, b, b' and c.

Its subcellular location is the plastid. It is found in the chloroplast thylakoid membrane. It carries out the reaction ATP + H2O + 4 H(+)(in) = ADP + phosphate + 5 H(+)(out). Produces ATP from ADP in the presence of a proton gradient across the membrane. The alpha chain is a regulatory subunit. The protein is ATP synthase subunit alpha, chloroplastic of Morus indica (Mulberry).